We begin with the raw amino-acid sequence, 443 residues long: Ribulose bisphosphate carboxylase large chain (443 aa).

Residues N89 and T139 each coordinate substrate. K141 acts as the Proton acceptor in catalysis. K143 provides a ligand contact to substrate. Residues K167, D169, and E170 each contribute to the Mg(2+) site. Residue K167 is modified to N6-carboxylysine. The Proton acceptor role is filled by H260. 3 residues coordinate substrate: R261, H293, and S345.

This sequence belongs to the RuBisCO large chain family. Type I subfamily. In terms of assembly, heterohexadecamer of 8 large chains and 8 small chains; disulfide-linked. The disulfide link is formed within the large subunit homodimers. Mg(2+) is required as a cofactor. Post-translationally, the disulfide bond which can form in the large chain dimeric partners within the hexadecamer appears to be associated with oxidative stress and protein turnover.

Its subcellular location is the plastid. It localises to the chloroplast. It catalyses the reaction 2 (2R)-3-phosphoglycerate + 2 H(+) = D-ribulose 1,5-bisphosphate + CO2 + H2O. It carries out the reaction D-ribulose 1,5-bisphosphate + O2 = 2-phosphoglycolate + (2R)-3-phosphoglycerate + 2 H(+). Functionally, ruBisCO catalyzes two reactions: the carboxylation of D-ribulose 1,5-bisphosphate, the primary event in carbon dioxide fixation, as well as the oxidative fragmentation of the pentose substrate in the photorespiration process. Both reactions occur simultaneously and in competition at the same active site. In Sesamum indicum (Oriental sesame), this protein is Ribulose bisphosphate carboxylase large chain.